Consider the following 225-residue polypeptide: PKHD-type hydroxylase YbiX (225 aa).

A Fe2OG dioxygenase domain is found at 78–177; sequence TLSTPLFNRY…RVASFMWIQS (100 aa). The Fe cation site is built by His96, Asp98, and His158. Arg168 is a 2-oxoglutarate binding site.

Fe(2+) serves as cofactor. It depends on L-ascorbate as a cofactor.

In Shigella dysenteriae serotype 1 (strain Sd197), this protein is PKHD-type hydroxylase YbiX.